The following is a 211-amino-acid chain: FMN-dependent NADH:quinone oxidoreductase 2 (211 aa).

17 to 19 serves as a coordination point for FMN; that stretch reads SYS.

It belongs to the azoreductase type 1 family. As to quaternary structure, homodimer. It depends on FMN as a cofactor.

The catalysed reaction is 2 a quinone + NADH + H(+) = 2 a 1,4-benzosemiquinone + NAD(+). It carries out the reaction N,N-dimethyl-1,4-phenylenediamine + anthranilate + 2 NAD(+) = 2-(4-dimethylaminophenyl)diazenylbenzoate + 2 NADH + 2 H(+). With respect to regulation, strongly inhibited by Pb(2+) and weakly inhibited by Cu(2+), Hg(2+) and Fe(2+). Stable in presence of Ag(+). In terms of biological role, quinone reductase that provides resistance to thiol-specific stress caused by electrophilic quinones. Contributes to resistance to 2-methylhydroquinone (2-MHQ) and catechol. Exhibits NADH-dependent 2,6-dichloroindophenol (DCIP) oxidoreductase activity. Also exhibits azoreductase activity. Catalyzes the reductive cleavage of the azo bond in aromatic azo compounds to the corresponding amines. Can reduce methyl red. The protein is FMN-dependent NADH:quinone oxidoreductase 2 of Bacillus subtilis (strain 168).